The chain runs to 619 residues: Translation initiation factor IF-2 (619 aa).

The tr-type G domain occupies 120–289 (PRPPIVTIMG…ILLLGEVEGY (170 aa)). A G1 region spans residues 129-136 (GHVDHGKT). Residue 129–136 (GHVDHGKT) participates in GTP binding. The segment at 154–158 (GITQK) is G2. The tract at residues 176–179 (DTPG) is G3. Residues 176–180 (DTPGH) and 230–233 (NKMD) each bind GTP. Residues 230–233 (NKMD) form a G4 region. The G5 stretch occupies residues 266–268 (SAL).

Belongs to the TRAFAC class translation factor GTPase superfamily. Classic translation factor GTPase family. IF-2 subfamily.

The protein resides in the cytoplasm. Its function is as follows. One of the essential components for the initiation of protein synthesis. Protects formylmethionyl-tRNA from spontaneous hydrolysis and promotes its binding to the 30S ribosomal subunits. Also involved in the hydrolysis of GTP during the formation of the 70S ribosomal complex. The chain is Translation initiation factor IF-2 (infB) from Mycoplasma genitalium (strain ATCC 33530 / DSM 19775 / NCTC 10195 / G37) (Mycoplasmoides genitalium).